The chain runs to 235 residues: Regulator of G-protein signaling 18 (235 aa).

Serine 49 is modified (phosphoserine). The region spanning 86–202 (SFDKLLSHRD…LKSETYLHLI (117 aa)) is the RGS domain. A phosphoserine mark is found at serine 216 and serine 218.

Expressed in bone marrow, spleen, fetal liver and lung. At very low levels expressed in heart.

The protein localises to the cytoplasm. Its function is as follows. Inhibits signal transduction by increasing the GTPase activity of G protein alpha subunits thereby driving them into their inactive GDP-bound form. Binds to G(i) alpha-1, G(i) alpha-2, G(i) alpha-3 and G(q) alpha. This is Regulator of G-protein signaling 18 (Rgs18) from Mus musculus (Mouse).